Reading from the N-terminus, the 195-residue chain is Small ribosomal subunit protein uS5 (195 aa).

A disordered region spans residues 1 to 20 (MAREREGGGRGRREDREERD). The S5 DRBM domain maps to 23–86 (FVDKLVHINR…EAAKRGLIRV (64 aa)). Residues 161–195 (DSPRSVAARRGIKVSTLQSRRRDADPADQSEAAVA) form a disordered region.

Belongs to the universal ribosomal protein uS5 family. Part of the 30S ribosomal subunit. Contacts proteins S4 and S8.

With S4 and S12 plays an important role in translational accuracy. Its function is as follows. Located at the back of the 30S subunit body where it stabilizes the conformation of the head with respect to the body. The sequence is that of Small ribosomal subunit protein uS5 from Methylobacterium radiotolerans (strain ATCC 27329 / DSM 1819 / JCM 2831 / NBRC 15690 / NCIMB 10815 / 0-1).